Reading from the N-terminus, the 507-residue chain is Phosphoprotein (507 aa).

Positions 1-48 are interaction with N0; that stretch reads MAEEQARHVKNGLECIRALKAEPIGSLAIEEAMAAWSEISDNPGQERA. Disordered stretches follow at residues 41–99, 134–163, 201–231, and 250–273; these read DNPG…PPRN, GLDG…TEGY, NNFP…IKKG, and GATQ…GNVP. S86 is modified (phosphoserine). Residues 134-145 show a composition bias toward low complexity; the sequence is GLDGDSTLSGGD. Acidic residues predominate over residues 146–160; sequence NESENSDVDIGEPDT. S151 is subject to Phosphoserine. Residues 260-270 show a composition bias toward low complexity; sequence SEPSGPGAPAG. The interval 304 to 376 is multimerization; that stretch reads GDYYDDELFS…LSSIMIAIPG (73 aa). 2 interaction with the L polymerase regions span residues 361-377 and 396-410; these read STLE…IPGL and PIIG…AEVL. Residues 457 to 507 form a x domain (XD) region; sequence GPASRSVIRSIIKSSRLEEDRKRYLMTLLDDIKGANDLAKFHQMLMKIIMK. The interaction with the nucleocapsid (N-RNA) stretch occupies residues 459 to 507; sequence ASRSVIRSIIKSSRLEEDRKRYLMTLLDDIKGANDLAKFHQMLMKIIMK.

It belongs to the morbillivirus P protein family. As to quaternary structure, homotetramer. Interacts (via multimerization domain and XD domain) with polymerase L; this interaction forms the polymerase L-P complex. Interacts (via N-terminus) with N0 (via Ncore); this interaction allows P to chaperon N0 to avoid N polymerization and non-specific RNA binding before encapsidation. Interacts (via C-terminus) with N-RNA template (via Ntail); this interaction maintains the P/L complex anchored to the nucleocapsid template during the sequential transcription. Interacts (via C-terminus) with protein C this interaction allows C to associate with the ribonucleocapsid. In terms of processing, phosphorylation on serines by host CK2 is necessary for the formation of viral factories.

Essential cofactor of the RNA polymerase L that plays a central role in the transcription and replication by forming the polymerase complex with RNA polymerase L and recruiting L to the genomic N-RNA template for RNA synthesis. Also plays a central role in the encapsidation of nascent RNA chains by forming the encapsidation complex with the nucleocapsid protein N (N-P complex). Acts as a chaperone for newly synthesized free N protein, so-called N0, allowing encapsidation of nascent RNA chains during replication. The nucleoprotein protein N prevents excessive phosphorylation of P, which leads to down-regulation of viral transcription/ replication. Participates, together with N, in the formation of viral factories (viroplasms), which are large inclusions in the host cytoplasm where replication takes place. This is Phosphoprotein (P/V) from Measles virus (strain Edmonston) (MeV).